The following is a 1700-amino-acid chain: A-kinase anchor protein SPHKAP (1700 aa).

3 disordered regions span residues 364–385, 742–778, and 793–885; these read SNLNPGDHEDTRNALPPRQDGE, IRRRETEPSCQPSDPGASQAWTKATESSSSSPLSNSH, and SKQD…NTQE. The span at 768-778 shows a compositional bias: low complexity; it reads SSSSSPLSNSH. Residues 822–831 are compositionally biased toward polar residues; the sequence is DSSTATTSSK. Residues 839–855 show a composition bias toward basic and acidic residues; it reads AGEDTKSPHHSENECRA. A compositionally biased stretch (polar residues) spans 857–873; it reads SEGQRSPTVSQSRSGSQ. Positions 929 to 946 are PKA-RII subunit binding domain; the sequence is FAEELADTVVSMATEIAA. Residues 980 to 1006 are disordered; sequence KRKKESQGSGTAVRKHKPPRLSEIKRK. 8 positions are modified to phosphoserine: Ser-1025, Ser-1085, Ser-1107, Ser-1120, Ser-1121, Ser-1124, Ser-1259, and Ser-1288. Disordered stretches follow at residues 1374 to 1414, 1481 to 1535, and 1585 to 1604; these read DSVT…PVPI, IHSD…DTSS, and GQSESTEAPASGPPTGTASP. Positions 1383–1398 are enriched in polar residues; the sequence is PVSSLSKTASLTNHSP. Residues 1586–1604 show a composition bias toward polar residues; sequence QSESTEAPASGPPTGTASP.

This sequence belongs to the AKAP110 family. Interacts (via the PKA-RII subunit binding domain) with the RI subunit of PKA. Interacts with SPHK1; the interaction greatly reduces SPHK1 activity. Highly expressed in heart. Both isoforms abundantly expressed in ventricle. Also expressed in spleen, ovary and brain.

The protein resides in the cytoplasm. Anchoring protein that binds preferentially to the type I regulatory subunit of c-AMP-dependent protein kinase (PKA type I) and targets it to distinct subcellular compartments. May act as a converging factor linking cAMP and sphingosine signaling pathways. Plays a regulatory role in the modulation of SPHK1. This is A-kinase anchor protein SPHKAP (SPHKAP) from Homo sapiens (Human).